Here is a 64-residue protein sequence, read N- to C-terminus: Large ribosomal subunit protein bL32 (64 aa).

A disordered region spans residues 1 to 64 (MAVQQNRKTR…APKHGDETEE (64 aa)). Positions 7–16 (RKTRSKRGMR) are enriched in basic residues.

It belongs to the bacterial ribosomal protein bL32 family.

The sequence is that of Large ribosomal subunit protein bL32 from Methylococcus capsulatus (strain ATCC 33009 / NCIMB 11132 / Bath).